A 129-amino-acid polypeptide reads, in one-letter code: Follitropin subunit beta (129 aa).

Positions 1–20 are cleaved as a signal peptide; the sequence is MKTVQFCFLFCCWKAICCNS. 6 cysteine pairs are disulfide-bonded: cysteine 21/cysteine 69, cysteine 35/cysteine 84, cysteine 38/cysteine 122, cysteine 46/cysteine 100, cysteine 50/cysteine 102, and cysteine 105/cysteine 112. Asparagine 25 and asparagine 42 each carry an N-linked (GlcNAc...) asparagine glycan.

Belongs to the glycoprotein hormones subunit beta family. Heterodimer. The active follitropin is a heterodimer composed of an alpha chain/CGA shared with other hormones and a unique beta chain/FSHB shown here.

The protein localises to the secreted. Its function is as follows. Together with the alpha chain CGA constitutes follitropin, the follicle-stimulating hormone, and provides its biological specificity to the hormone heterodimer. Binds FSHR, a G protein-coupled receptor, on target cells to activate downstream signaling pathways. Follitropin is involved in follicle development and spermatogenesis in reproductive organs. The sequence is that of Follitropin subunit beta (FSHB) from Saimiri boliviensis boliviensis (Bolivian squirrel monkey).